We begin with the raw amino-acid sequence, 92 residues long: Small ribosomal subunit protein uS17 (92 aa).

The protein belongs to the universal ribosomal protein uS17 family. In terms of assembly, part of the 30S ribosomal subunit.

One of the primary rRNA binding proteins, it binds specifically to the 5'-end of 16S ribosomal RNA. This Cupriavidus necator (strain ATCC 17699 / DSM 428 / KCTC 22496 / NCIMB 10442 / H16 / Stanier 337) (Ralstonia eutropha) protein is Small ribosomal subunit protein uS17.